The sequence spans 691 residues: Elongation factor G (691 aa).

One can recognise a tr-type G domain in the interval 6 to 281 (SRYRNIGIMA…GVVDFLPSPI (276 aa)). Residues 15-22 (AHIDAGKT), 79-83 (DTPGH), and 133-136 (NKMD) contribute to the GTP site.

The protein belongs to the TRAFAC class translation factor GTPase superfamily. Classic translation factor GTPase family. EF-G/EF-2 subfamily.

It localises to the cytoplasm. Catalyzes the GTP-dependent ribosomal translocation step during translation elongation. During this step, the ribosome changes from the pre-translocational (PRE) to the post-translocational (POST) state as the newly formed A-site-bound peptidyl-tRNA and P-site-bound deacylated tRNA move to the P and E sites, respectively. Catalyzes the coordinated movement of the two tRNA molecules, the mRNA and conformational changes in the ribosome. The protein is Elongation factor G of Wolbachia pipientis subsp. Culex pipiens (strain wPip).